The chain runs to 572 residues: Urease subunit alpha (572 aa).

In terms of domain architecture, Urease spans 134-572 (GGIDAHVHFI…LPMAQRYFLF (439 aa)). Ni(2+)-binding residues include H139, H141, and K222. Residue K222 is modified to N6-carboxylysine. H224 contributes to the substrate binding site. Positions 251 and 277 each coordinate Ni(2+). The active-site Proton donor is H325. D365 contacts Ni(2+).

It belongs to the metallo-dependent hydrolases superfamily. Urease alpha subunit family. Heterotrimer of UreA (gamma), UreB (beta) and UreC (alpha) subunits. Three heterotrimers associate to form the active enzyme. Ni cation is required as a cofactor. Post-translationally, carboxylation allows a single lysine to coordinate two nickel ions.

The protein resides in the cytoplasm. It catalyses the reaction urea + 2 H2O + H(+) = hydrogencarbonate + 2 NH4(+). It functions in the pathway nitrogen metabolism; urea degradation; CO(2) and NH(3) from urea (urease route): step 1/1. The sequence is that of Urease subunit alpha from Synechococcus sp. (strain JA-2-3B'a(2-13)) (Cyanobacteria bacterium Yellowstone B-Prime).